A 217-amino-acid polypeptide reads, in one-letter code: 3,4-dihydroxy-2-butanone 4-phosphate synthase (217 aa).

D-ribulose 5-phosphate contacts are provided by residues 37-38 (RE), Asp-42, 150-154 (RGGHT), and Glu-174. Residue Glu-38 participates in Mg(2+) binding. His-153 serves as a coordination point for Mg(2+).

It belongs to the DHBP synthase family. As to quaternary structure, homodimer. Mg(2+) serves as cofactor. Mn(2+) is required as a cofactor.

It carries out the reaction D-ribulose 5-phosphate = (2S)-2-hydroxy-3-oxobutyl phosphate + formate + H(+). It functions in the pathway cofactor biosynthesis; riboflavin biosynthesis; 2-hydroxy-3-oxobutyl phosphate from D-ribulose 5-phosphate: step 1/1. Functionally, catalyzes the conversion of D-ribulose 5-phosphate to formate and 3,4-dihydroxy-2-butanone 4-phosphate. In Enterobacter sp. (strain 638), this protein is 3,4-dihydroxy-2-butanone 4-phosphate synthase.